The primary structure comprises 86 residues: UPF0457 protein BCE33L2265 (86 aa).

It belongs to the UPF0457 family.

The polypeptide is UPF0457 protein BCE33L2265 (Bacillus cereus (strain ZK / E33L)).